We begin with the raw amino-acid sequence, 440 residues long: Thymidine phosphorylase (440 aa).

It belongs to the thymidine/pyrimidine-nucleoside phosphorylase family. Homodimer.

The catalysed reaction is thymidine + phosphate = 2-deoxy-alpha-D-ribose 1-phosphate + thymine. It participates in pyrimidine metabolism; dTMP biosynthesis via salvage pathway; dTMP from thymine: step 1/2. Functionally, the enzymes which catalyze the reversible phosphorolysis of pyrimidine nucleosides are involved in the degradation of these compounds and in their utilization as carbon and energy sources, or in the rescue of pyrimidine bases for nucleotide synthesis. This is Thymidine phosphorylase from Salmonella choleraesuis (strain SC-B67).